The primary structure comprises 172 residues: MEPAVILRPLLEKGELKQSVERAQRARYVLYEVQDQGLNFVTASVLADVSAVEKMGLIRRTGKLFSDQEYCDLLNQKVFTVHPDMRGSLKEQGVAFASVEARAYGHWYGIFEVAFPWLPLSVFEDFVLYLRDTKSLSLDEQTAAAVKESFLACRRYSERELDVLFERVLSGE.

This is an uncharacterized protein from Treponema pallidum (strain Nichols).